The primary structure comprises 57 residues: uncharacterized protein (57 aa).

This is an uncharacterized protein from Ureaplasma parvum serovar 3 (strain ATCC 700970).